Reading from the N-terminus, the 138-residue chain is Protein FAM136A (138 aa).

N-acetylalanine is present on Ala-2. Phosphothreonine occurs at positions 124 and 126.

The protein belongs to the FAM136 family.

This is Protein FAM136A (Fam136a) from Rattus norvegicus (Rat).